A 106-amino-acid chain; its full sequence is Nucleoid-associated protein PD_1058 (106 aa).

It belongs to the YbaB/EbfC family. As to quaternary structure, homodimer.

The protein localises to the cytoplasm. It is found in the nucleoid. In terms of biological role, binds to DNA and alters its conformation. May be involved in regulation of gene expression, nucleoid organization and DNA protection. This chain is Nucleoid-associated protein PD_1058, found in Xylella fastidiosa (strain Temecula1 / ATCC 700964).